We begin with the raw amino-acid sequence, 236 residues long: Small ribosomal subunit protein uS2c (236 aa).

The protein belongs to the universal ribosomal protein uS2 family.

It is found in the plastid. The protein localises to the chloroplast. In Oryza nivara (Indian wild rice), this protein is Small ribosomal subunit protein uS2c (rps2).